The following is a 223-amino-acid chain: Voltage-dependent calcium channel gamma-1 subunit (223 aa).

At 1 to 10 (MSQTKTLKVR) the chain is on the cytoplasmic side. A helical membrane pass occupies residues 11-29 (VALLCILVGIVLALVAVVT). At 30–109 (DHWAVLSPHV…TQKEYSISAA (80 aa)) the chain is on the extracellular side. N-linked (GlcNAc...) asparagine glycosylation is found at asparagine 43 and asparagine 80. Residues cysteine 57 and cysteine 81 are joined by a disulfide bond. A helical membrane pass occupies residues 110–130 (AIAIFSLGFIIVGTLCALLSF). Topologically, residues 131–135 (RKKRD) are cytoplasmic. A helical membrane pass occupies residues 136–156 (YLLRPASMFYIFAGLCLSVSA). Topologically, residues 157–180 (EVMRQSVQRMVDSEHTAWIAHSLA) are extracellular. Residues 181–205 (WSFICACVAAALLLVGGLALLLLAL) traverse the membrane as a helical segment. The Cytoplasmic segment spans residues 206 to 223 (PRMPRDPWESCMDAEPEH).

It belongs to the PMP-22/EMP/MP20 family. CACNG subfamily. Component of a calcium channel complex consisting of a pore-forming alpha subunit (CACNA1S) and the ancillary subunits CACNB1 or CACNB2, CACNG1 and CACNA2D1. The channel complex contains alpha, beta, gamma and delta subunits in a 1:1:1:1 ratio, i.e. it contains either CACNB1 or CACNB2. N-glycosylated.

The protein localises to the cell membrane. It localises to the sarcolemma. Its function is as follows. Regulatory subunit of the voltage-gated calcium channel that gives rise to L-type calcium currents in skeletal muscle. Regulates channel inactivation kinetics. The sequence is that of Voltage-dependent calcium channel gamma-1 subunit (CACNG1) from Bos taurus (Bovine).